Consider the following 568-residue polypeptide: Zinc finger protein 648 (568 aa).

Over residues 1 to 11 (MAQVDSQDRWG) the composition is skewed to basic and acidic residues. Residues 1–106 (MAQVDSQDRW…MSGKASWSRD (106 aa)) form a disordered region. C2H2-type zinc fingers lie at residues 279–301 (YACE…RRLH), 307–329 (YQCS…IRTH), 335–358 (YPCP…RNMH), 364–386 (FPCS…QRTH), 392–414 (FRCP…QRVH), 420–442 (FPCP…QTLH), 448–470 (FKCA…QRIH), 476–498 (FPCT…QQIH), 504–526 (FLCA…IRMH), and 532–554 (YQCE…RAKH). A disordered region spans residues 548–568 (QRHRAKHGTCKKEPIPSSSDE).

This sequence belongs to the krueppel C2H2-type zinc-finger protein family.

It is found in the nucleus. Its function is as follows. May be involved in transcriptional regulation. In Homo sapiens (Human), this protein is Zinc finger protein 648 (ZNF648).